Here is a 143-residue protein sequence, read N- to C-terminus: Large ribosomal subunit protein uL11 (143 aa).

Belongs to the universal ribosomal protein uL11 family. As to quaternary structure, part of the ribosomal stalk of the 50S ribosomal subunit. Interacts with L10 and the large rRNA to form the base of the stalk. L10 forms an elongated spine to which L12 dimers bind in a sequential fashion forming a multimeric L10(L12)X complex. Post-translationally, one or more lysine residues are methylated.

Forms part of the ribosomal stalk which helps the ribosome interact with GTP-bound translation factors. This chain is Large ribosomal subunit protein uL11, found in Burkholderia multivorans (strain ATCC 17616 / 249).